A 197-amino-acid chain; its full sequence is Nucleoside triphosphate pyrophosphatase (197 aa).

The active-site Proton acceptor is aspartate 71.

The protein belongs to the Maf family. It depends on a divalent metal cation as a cofactor.

The protein resides in the cytoplasm. The enzyme catalyses a ribonucleoside 5'-triphosphate + H2O = a ribonucleoside 5'-phosphate + diphosphate + H(+). It carries out the reaction a 2'-deoxyribonucleoside 5'-triphosphate + H2O = a 2'-deoxyribonucleoside 5'-phosphate + diphosphate + H(+). Its function is as follows. Nucleoside triphosphate pyrophosphatase. May have a dual role in cell division arrest and in preventing the incorporation of modified nucleotides into cellular nucleic acids. The polypeptide is Nucleoside triphosphate pyrophosphatase (Trichormus variabilis (strain ATCC 29413 / PCC 7937) (Anabaena variabilis)).